The following is a 219-amino-acid chain: Thiopurine S-methyltransferase (219 aa).

Positions 10, 45, 66, and 123 each coordinate S-adenosyl-L-methionine.

This sequence belongs to the class I-like SAM-binding methyltransferase superfamily. TPMT family.

The protein localises to the cytoplasm. The enzyme catalyses S-adenosyl-L-methionine + a thiopurine = S-adenosyl-L-homocysteine + a thiopurine S-methylether.. The polypeptide is Thiopurine S-methyltransferase (Bordetella bronchiseptica (strain ATCC BAA-588 / NCTC 13252 / RB50) (Alcaligenes bronchisepticus)).